The primary structure comprises 232 residues: UPF0502 protein mma_2112 (232 aa).

Belongs to the UPF0502 family.

The protein is UPF0502 protein mma_2112 of Janthinobacterium sp. (strain Marseille) (Minibacterium massiliensis).